Here is a 757-residue protein sequence, read N- to C-terminus: Protein transport protein SEC23-2 (757 aa).

Cys-56, Cys-61, Cys-80, and Cys-83 together coordinate Zn(2+).

Belongs to the SEC23/SEC24 family. SEC23 subfamily. As to quaternary structure, the COPII coat is composed of at least 5 proteins: the SEC23/24 complex, the SEC13/31 complex, and the protein SAR1.

The protein localises to the cytoplasm. It is found in the cytoplasmic vesicle. The protein resides in the COPII-coated vesicle membrane. It localises to the endoplasmic reticulum membrane. Its subcellular location is the golgi apparatus membrane. In terms of biological role, component of the coat protein complex II (COPII) which promotes the formation of transport vesicles from the endoplasmic reticulum (ER). The coat has two main functions, the physical deformation of the endoplasmic reticulum membrane into vesicles and the selection of cargo molecules. This is Protein transport protein SEC23-2 (SEC232) from Candida glabrata (strain ATCC 2001 / BCRC 20586 / JCM 3761 / NBRC 0622 / NRRL Y-65 / CBS 138) (Yeast).